A 199-amino-acid polypeptide reads, in one-letter code: Peroxiredoxin-2 (199 aa).

One can recognise a Thioredoxin domain in the interval 7 to 165 (AHVGKPAPEF…ALRLVQAFQY (159 aa)). Residue cysteine 52 is the Cysteine sulfenic acid (-SOH) intermediate of the active site. The residue at position 113 (serine 113) is a Phosphoserine. Threonine 183 is modified (phosphothreonine). N6-acetyllysine is present on lysine 197.

This sequence belongs to the peroxiredoxin family. AhpC/Prx1 subfamily. Homodimer; disulfide-linked, upon oxidation. 5 homodimers assemble to form a ring-like decamer. Interacts with TIPIN. The enzyme can be inactivated by further oxidation of the cysteine sulfenic acid (C(P)-SOH) to sulphinic acid (C(P)-SO2H) instead of its condensation to a disulfide bond. It can be reactivated by forming a transient disulfide bond with sulfiredoxin SRXN1, which reduces the cysteine sulfinic acid in an ATP- and Mg-dependent manner. Post-translationally, acetylation increases resistance to transition to high molecular-mass complexes. Deacetylated by HDAC6 which decreases reducing activity.

The protein resides in the cytoplasm. It catalyses the reaction a hydroperoxide + [thioredoxin]-dithiol = an alcohol + [thioredoxin]-disulfide + H2O. In terms of biological role, thiol-specific peroxidase that catalyzes the reduction of hydrogen peroxide and organic hydroperoxides to water and alcohols, respectively. Plays a role in cell protection against oxidative stress by detoxifying peroxides and as sensor of hydrogen peroxide-mediated signaling events. Might participate in the signaling cascades of growth factors and tumor necrosis factor-alpha by regulating the intracellular concentrations of H(2)O(2). The chain is Peroxiredoxin-2 (PRDX2) from Bos taurus (Bovine).